Reading from the N-terminus, the 146-residue chain is MKLHELKPSEGSRKVRNRVGRGIGSGNGKTAGKGHKGQNARSGGGVRPGFEGGQMPLFQRLPKRGFTNINRKDYAIVNVDKLNGFAEGTEVTPELLLETGVISKLNAGVKILGNGKLEKKLTVKANKFSASAKEAVEAAGGTAEVI.

Basic and acidic residues predominate over residues 1–13 (MKLHELKPSEGSR). A disordered region spans residues 1-54 (MKLHELKPSEGSRKVRNRVGRGIGSGNGKTAGKGHKGQNARSGGGVRPGFEGGQ). Gly residues-rich tracts occupy residues 21–31 (RGIGSGNGKTA) and 42–52 (SGGGVRPGFEG).

This sequence belongs to the universal ribosomal protein uL15 family. As to quaternary structure, part of the 50S ribosomal subunit.

Binds to the 23S rRNA. The protein is Large ribosomal subunit protein uL15 of Bacillus velezensis (strain DSM 23117 / BGSC 10A6 / LMG 26770 / FZB42) (Bacillus amyloliquefaciens subsp. plantarum).